Reading from the N-terminus, the 409-residue chain is Dihydrolipoyllysine-residue succinyltransferase component of 2-oxoglutarate dehydrogenase complex (409 aa).

The Lipoyl-binding domain maps to 2–77 (AIEIKAPTFP…LSNELLGKLN (76 aa)). At lysine 43 the chain carries N6-lipoyllysine. Positions 112-149 (ILSPAARKLAEEAGIDPNSIAGTGKGGRVTKEDVVAAV) constitute a Peripheral subunit-binding (PSBD) domain. Active-site residues include histidine 380 and aspartate 384.

Belongs to the 2-oxoacid dehydrogenase family. In terms of assembly, forms a 24-polypeptide structural core with octahedral symmetry. Part of the 2-oxoglutarate dehydrogenase (OGDH) complex composed of E1 (2-oxoglutarate dehydrogenase), E2 (dihydrolipoamide succinyltransferase) and E3 (dihydrolipoamide dehydrogenase); the complex contains multiple copies of the three enzymatic components (E1, E2 and E3). It depends on (R)-lipoate as a cofactor.

The enzyme catalyses N(6)-[(R)-dihydrolipoyl]-L-lysyl-[protein] + succinyl-CoA = N(6)-[(R)-S(8)-succinyldihydrolipoyl]-L-lysyl-[protein] + CoA. The protein operates within amino-acid degradation; L-lysine degradation via saccharopine pathway; glutaryl-CoA from L-lysine: step 6/6. Its function is as follows. E2 component of the 2-oxoglutarate dehydrogenase (OGDH) complex which catalyzes the second step in the conversion of 2-oxoglutarate to succinyl-CoA and CO(2). This is Dihydrolipoyllysine-residue succinyltransferase component of 2-oxoglutarate dehydrogenase complex (sucB) from Pseudomonas aeruginosa (strain ATCC 15692 / DSM 22644 / CIP 104116 / JCM 14847 / LMG 12228 / 1C / PRS 101 / PAO1).